The primary structure comprises 259 residues: UPF0246 protein PSPA7_1607 (259 aa).

Belongs to the UPF0246 family.

The sequence is that of UPF0246 protein PSPA7_1607 from Pseudomonas paraeruginosa (strain DSM 24068 / PA7) (Pseudomonas aeruginosa (strain PA7)).